The following is a 412-amino-acid chain: ATP phosphoribosyltransferase regulatory subunit (412 aa).

This sequence belongs to the class-II aminoacyl-tRNA synthetase family. HisZ subfamily. Heteromultimer composed of HisG and HisZ subunits.

It localises to the cytoplasm. It participates in amino-acid biosynthesis; L-histidine biosynthesis; L-histidine from 5-phospho-alpha-D-ribose 1-diphosphate: step 1/9. Its function is as follows. Required for the first step of histidine biosynthesis. May allow the feedback regulation of ATP phosphoribosyltransferase activity by histidine. The protein is ATP phosphoribosyltransferase regulatory subunit of Dehalococcoides mccartyi (strain CBDB1).